We begin with the raw amino-acid sequence, 215 residues long: Protein-L-isoaspartate O-methyltransferase (215 aa).

S62 is an active-site residue.

This sequence belongs to the methyltransferase superfamily. L-isoaspartyl/D-aspartyl protein methyltransferase family.

The protein localises to the cytoplasm. The catalysed reaction is [protein]-L-isoaspartate + S-adenosyl-L-methionine = [protein]-L-isoaspartate alpha-methyl ester + S-adenosyl-L-homocysteine. Catalyzes the methyl esterification of L-isoaspartyl residues in peptides and proteins that result from spontaneous decomposition of normal L-aspartyl and L-asparaginyl residues. It plays a role in the repair and/or degradation of damaged proteins. The sequence is that of Protein-L-isoaspartate O-methyltransferase from Bradyrhizobium sp. (strain ORS 278).